A 98-amino-acid polypeptide reads, in one-letter code: MARSIKKGPFADKHLTKKVEDANKGNKKSVIKTWSRRSTILPDFVGHTFAVHNGRKFVPVFVTENMVGHKLGEFAPTRTFHGHSAEKKAAAAPAPAKK.

2 disordered regions span residues 1–30 (MARSIKKGPFADKHLTKKVEDANKGNKKSV) and 78–98 (RTFHGHSAEKKAAAAPAPAKK). The span at 9 to 24 (PFADKHLTKKVEDANK) shows a compositional bias: basic and acidic residues.

Belongs to the universal ribosomal protein uS19 family.

In terms of biological role, protein S19 forms a complex with S13 that binds strongly to the 16S ribosomal RNA. This chain is Small ribosomal subunit protein uS19, found in Anaeromyxobacter dehalogenans (strain 2CP-1 / ATCC BAA-258).